A 146-amino-acid polypeptide reads, in one-letter code: Hemoglobin cathodic subunit beta (146 aa).

The region spanning 2-146 (HFSDAERDAI…VAAALSSRYF (145 aa)) is the Globin domain. 2 residues coordinate heme b: H63 and H92.

This sequence belongs to the globin family. Heterotetramer of two alpha chains and two beta chains. Red blood cells.

In terms of biological role, involved in oxygen transport from gills to the various peripheral tissues. This Hoplosternum littorale (Hassar) protein is Hemoglobin cathodic subunit beta (hbb).